The chain runs to 644 residues: Interleukin-23 receptor (644 aa).

The first 23 residues, 1-23 (MSHLTLQLHVVIALYVLFRWCHG), serve as a signal peptide directing secretion. Residues 24–374 (GITSINCSGD…PASGNHQDIG (351 aa)) are Extracellular-facing. N-linked (GlcNAc...) asparagine glycans are attached at residues N47, N130, and N232. 2 consecutive Fibronectin type-III domains span residues 127–217 (APSN…LDDI) and 219–318 (IPSA…TSQE). The helical transmembrane segment at 375 to 395 (LLSGMVFLAIMLPIFSLIGIF) threads the bilayer. Residues 396-644 (NRSLRIGIKR…HFSRISLFQK (249 aa)) lie on the Cytoplasmic side of the membrane.

It belongs to the type I cytokine receptor family. Type 2 subfamily. In terms of assembly, heterodimer with IL12RB1. In presence of IL23, the heterodimer forms the IL23 receptor. Interacts with JAK2 and in presence of IL23 with STAT3. In terms of processing, phosphorylated in response to IL23. Expressed by Th1, Th2 and dendritic cells.

Its subcellular location is the cell membrane. Its function is as follows. Associates with IL12RB1 to form the interleukin-23 receptor. Binds IL23 and mediates T-cells, NK cells and possibly certain macrophage/myeloid cells stimulation probably through activation of the Jak-Stat signaling cascade. IL23 functions in innate and adaptive immunity and may participate in acute response to infection in peripheral tissues. IL23 may be responsible for autoimmune inflammatory diseases and be important for tumorigenesis. The polypeptide is Interleukin-23 receptor (Il23r) (Mus musculus (Mouse)).